We begin with the raw amino-acid sequence, 462 residues long: MQVTEINAEGLKREFKVVVPAQQLETRMQDKLAEIARTVAMPGFRPGKVPMTIVRKKYGGAVMGEILENAVNDGAGKAITDGGLRPAMQPKIEITKYEENSDLEFTVAVEVLPEIKTMDFGTINLVRDKAVVPDAEVDDALAKIAERNETSEPVKRASKSGDVVVIDFVGKVDGVAFPGGTAEGYSLKLGSNTFIPGFEDQLVGKKAESDVEVNVTFPEGYGNETLAGKPALFEVKVKEVRAPKAAAVDDELAKSVGLENLDALKTAIRDEISRELDGVSRMKLKRALLDALSDGHDFPVPPSMLEGEFEAIWKQVEADKEAGRQDPADAAKSEDELKADYRALAERRVRLGLLLADVGRVNEINVTQEDLNRGIMMEARRYPGQEHLVLQYYQKNQEALESLRAPLYEEKVVDFILELAKITDKEVSVEDLRKDPDEASADGEAAPAKPKKKAAAKKKAAE.

Residues 161 to 246 (GDVVVIDFVG…VKEVRAPKAA (86 aa)) enclose the PPIase FKBP-type domain. The segment covering 428-437 (SVEDLRKDPD) has biased composition (basic and acidic residues). The tract at residues 428–462 (SVEDLRKDPDEASADGEAAPAKPKKKAAAKKKAAE) is disordered. Basic residues predominate over residues 449–462 (KPKKKAAAKKKAAE).

Belongs to the FKBP-type PPIase family. Tig subfamily.

The protein localises to the cytoplasm. It carries out the reaction [protein]-peptidylproline (omega=180) = [protein]-peptidylproline (omega=0). In terms of biological role, involved in protein export. Acts as a chaperone by maintaining the newly synthesized protein in an open conformation. Functions as a peptidyl-prolyl cis-trans isomerase. In Paramagnetospirillum magneticum (strain ATCC 700264 / AMB-1) (Magnetospirillum magneticum), this protein is Trigger factor.